A 307-amino-acid chain; its full sequence is RHOMBOID-like protein 6, mitochondrial (307 aa).

A mitochondrion-targeting transit peptide spans 1-62 (MRSRDMERGR…DCVAKLLRRF (62 aa)). 6 consecutive transmembrane segments (helical) span residues 105–125 (WLHAGIIHLVMNMFDVIIFGI), 136–156 (IGLIYLISGFGGSILSALFLQ), 159–179 (ISVGASGALLGLMGAMLSELL), 191–211 (ALLSFLFIIAINLAIGLLPWV), 214–234 (FAHIGGLLTGFCLGFILLMQP), and 262–282 (LFFVAAVLVVAGLTVGLVMLF). Ser164 acts as the Nucleophile in catalysis. His216 acts as the Charge relay system in catalysis.

The protein belongs to the peptidase S54 family.

It is found in the mitochondrion membrane. It carries out the reaction Cleaves type-1 transmembrane domains using a catalytic dyad composed of serine and histidine that are contributed by different transmembrane domains.. Its function is as follows. Probable rhomboid-type serine protease that catalyzes intramembrane proteolysis. Might be involved in response to abiotic stimuli. The chain is RHOMBOID-like protein 6, mitochondrial from Arabidopsis thaliana (Mouse-ear cress).